A 1162-amino-acid polypeptide reads, in one-letter code: Transcription termination factor 2 (1162 aa).

Zn(2+) is bound by residues C6, H9, C32, and C37. The GRF-type zinc finger occupies 6-46 (CPEHGTFCFLKTGVRDGPNKGKSFYVCRADTCSFVRATDIP). 4 disordered regions span residues 97-116 (PDSK…ETFH), 142-358 (IKGE…EEDD), 388-407 (DRSV…KVEP), and 459-503 (LSPE…TQPV). Residues 105–116 (SNKSQHASETFH) are compositionally biased toward polar residues. A compositionally biased stretch (basic and acidic residues) spans 142–178 (IKGEGEEKKADKKQREKGDQLFDQKKEQKPEMMEKDL). K143 participates in a covalent cross-link: Glycyl lysine isopeptide (Lys-Gly) (interchain with G-Cter in SUMO2). Over residues 219–232 (IKSQQCQGNELTRP) the composition is skewed to polar residues. Positions 233–245 (SASSQEKSSGKSQ) are enriched in low complexity. Residues 246-258 (DVQRESEPLREKV) are compositionally biased toward basic and acidic residues. Polar residues predominate over residues 261-274 (LLPQNVHSHNSISK). Low complexity predominate over residues 323–338 (PAPGGPAAQAAPAAPG). Over residues 459 to 485 (LSPEQGTNEKSNSQVPQQSHFTKTTTG) the composition is skewed to polar residues. S460 is subject to Phosphoserine. One can recognise a Helicase ATP-binding domain in the interval 583-786 (WRESQKPQGG…YSLLKFLRCS (204 aa)). ATP is bound at residue 596-603 (DDMGLGKT). A DEAH box motif is present at residues 737–740 (DEAH). Positions 871–890 (KRHESRGNQSGRSPNNPFSR) are disordered. The segment covering 877–888 (GNQSGRSPNNPF) has biased composition (polar residues). S883 and S908 each carry phosphoserine. The Helicase C-terminal domain maps to 995 to 1157 (SLLAELEAIQ…VTKLTLADLR (163 aa)).

Belongs to the SNF2/RAD54 helicase family. In terms of assembly, interacts with CDC5L. Part of the spliceosome.

Its subcellular location is the cytoplasm. It is found in the nucleus. DsDNA-dependent ATPase which acts as a transcription termination factor by coupling ATP hydrolysis with removal of RNA polymerase II from the DNA template. May contribute to mitotic transcription repression. May also be involved in pre-mRNA splicing. This is Transcription termination factor 2 (TTF2) from Homo sapiens (Human).